A 912-amino-acid polypeptide reads, in one-letter code: Probable transmembrane GTPase FZO-like, chloroplastic (912 aa).

The transit peptide at 1–54 (MRTLISHRQCVTSPFLISAASPPFPGRCFKLSSFTPPRHRRFSSLSIRNISHES) directs the protein to the chloroplast. The disordered stretch occupies residues 51–71 (SHESADQTSSSRPRTLYPGGY). Topologically, residues 55–773 (ADQTSSSRPR…SKRLEQDIRE (719 aa)) are stromal. Residues 359 to 364 (NSGKST) and serine 521 each bind GTP. Residues 774–794 (VFFVTVGGLGAAGLSASLLTS) traverse the membrane as a helical segment. The Chloroplast intermembrane segment spans residues 795 to 801 (VLPTTLE). Residues 802–822 (DLLALGLCSAGGYVAIANFPY) form a helical membrane-spanning segment. Over 823 to 912 (RRQAIIGKVN…LHVSRDEMRL (90 aa)) the chain is Stromal. Residues 877-904 (DRLLGIQKELSDIRSKLQLLQVDIDNLH) adopt a coiled-coil conformation.

It belongs to the TRAFAC class dynamin-like GTPase superfamily. Dynamin/Fzo/YdjA family. Mitofusin subfamily.

It is found in the plastid. The protein resides in the chloroplast inner membrane. Its subcellular location is the chloroplast thylakoid membrane. Functionally, probable membrane-remodeling GTPase that plays a unique role in the in the determination of thylakoid and chloroplast morphology and regulates organization of the thylakoid network. Not involved in the determination of mitochondrial morphology or ultrastructure. The sequence is that of Probable transmembrane GTPase FZO-like, chloroplastic from Arabidopsis thaliana (Mouse-ear cress).